The following is a 710-amino-acid chain: Tubulin polyglutamylase TTLL11 (710 aa).

Residues 41-135 are disordered; that stretch reads VRVDAGAAGE…QRPVTVDSSK (95 aa). Residues 51–60 show a composition bias toward basic and acidic residues; the sequence is PECKAGEEQP. Residues 64 to 82 are compositionally biased toward low complexity; sequence APAPAQPSAAEEGNTQVLQ. Residues 83 to 93 show a composition bias toward pro residues; sequence RPPPTLPPSKP. Over residues 123–135 the composition is skewed to polar residues; the sequence is NGSQRPVTVDSSK. In terms of domain architecture, TTL spans 128 to 480; that stretch reads PVTVDSSKAR…EVKVAVIRDT (353 aa). ATP is bound by residues Lys249, 255-256, 282-285, and 295-297; these read QG, QEYI, and KFD. Gln255 contributes to the a protein binding site. Position 321 (Arg321) interacts with L-glutamate. 343–344 is an ATP binding site; the sequence is TN. 3 residues coordinate L-glutamate: Tyr345, Ser346, and Lys365. Asp428, Glu441, and Asn443 together coordinate Mg(2+). The segment at 467 to 538 is c-MTBD region; that stretch reads LVDEEVKVAV…SICLKQVFPK (72 aa). Residue Lys473 participates in L-glutamate binding. The interval 665–710 is disordered; that stretch reads GVPSGGRPPHRGPPQEPSPSAQPAGDNPPPRTSCANKLSHPRHTLS.

The protein belongs to the tubulin--tyrosine ligase family. The cofactor is Mg(2+).

The protein resides in the cytoplasm. Its subcellular location is the cytoskeleton. It localises to the cilium basal body. It carries out the reaction L-glutamyl-[protein] + L-glutamate + ATP = gamma-L-glutamyl-L-glutamyl-[protein] + ADP + phosphate + H(+). It catalyses the reaction (L-glutamyl)(n)-gamma-L-glutamyl-L-glutamyl-[protein] + L-glutamate + ATP = (L-glutamyl)(n+1)-gamma-L-glutamyl-L-glutamyl-[protein] + ADP + phosphate + H(+). Its function is as follows. Polyglutamylase which modifies tubulin, generating polyglutamate side chains of variable lengths on the gamma-carboxyl group of specific glutamate residues within the C-terminal tail of tubulin. Preferentially mediates ATP-dependent polyglutamate long side-chain elongation over the initiation step of the polyglutamylation reaction. Preferentially modifies the alpha-tubulin tail over a beta-tail. Required for CCSAP localization to both spindle and cilia microtubules. Promotes tubulin polyglutamylation which stimulates spastin/SPAST-mediated microtubule severing, thereby regulating microtubule functions. This chain is Tubulin polyglutamylase TTLL11, found in Homo sapiens (Human).